A 117-amino-acid chain; its full sequence is Holo-[acyl-carrier-protein] synthase (117 aa).

Mg(2+)-binding residues include D8 and E57.

This sequence belongs to the P-Pant transferase superfamily. AcpS family. Mg(2+) is required as a cofactor.

It is found in the cytoplasm. The enzyme catalyses apo-[ACP] + CoA = holo-[ACP] + adenosine 3',5'-bisphosphate + H(+). Functionally, transfers the 4'-phosphopantetheine moiety from coenzyme A to a Ser of acyl-carrier-protein. The protein is Holo-[acyl-carrier-protein] synthase of Limosilactobacillus reuteri (Lactobacillus reuteri).